A 629-amino-acid polypeptide reads, in one-letter code: Polyadenylate-binding protein, cytoplasmic and nuclear (629 aa).

The tract at residues 1–47 (MTLENKAEASPATKEETTTEAAPAEGEAKTESSEEKGSKEDQGDNAS) is disordered. Residues 26 to 42 (GEAKTESSEEKGSKEDQ) show a composition bias toward basic and acidic residues. RRM domains are found at residues 46-124 (ASLY…WSQR), 134-211 (GNIY…PHVP), 227-304 (TNVF…RAKK), and 330-407 (VNLY…LAQR). A disordered region spans residues 465–543 (GANPQMMMRP…RRKDGESRVA (79 aa)). 2 stretches are compositionally biased toward low complexity: residues 493–506 (MYGAPPQGYQQGGF) and 514–531 (GGQPPRSGQPGPQGQFRG). The region spanning 542-624 (VADSISNALE…AITAYNEYLN (83 aa)) is the PABC domain.

Belongs to the polyadenylate-binding protein type-1 family.

It localises to the cytoplasm. The protein resides in the nucleus. Its function is as follows. Binds the poly(A) tail of mRNA. Appears to be an important mediator of the multiple roles of the poly(A) tail in mRNA biogenesis, stability and translation. In the nucleus, involved in both mRNA cleavage and polyadenylation. Is also required for efficient mRNA export to the cytoplasm. Acts in concert with a poly(A)-specific nuclease (PAN) to affect poly(A) tail shortening, which may occur concomitantly with either nucleocytoplasmic mRNA transport or translational initiation. In the cytoplasm, stimulates translation initiation and regulates mRNA decay through translation termination-coupled poly(A) shortening, probably mediated by PAN. The protein is Polyadenylate-binding protein, cytoplasmic and nuclear (PAB1) of Yarrowia lipolytica (strain CLIB 122 / E 150) (Yeast).